The sequence spans 69 residues: Cytochrome c oxidase subunit 8A, mitochondrial (69 aa).

The transit peptide at 1 to 25 (MSVLTPLLLRGLTGSARRLPMPCAR) directs the protein to the mitochondrion. The short motif at 2–19 (SVLTPLLLRGLTGSARRL) is the SIFI-degron element. Topologically, residues 26–36 (VHSKPPREQLG) are mitochondrial matrix. Residues 37–60 (TMDIAIGLTSCFVCFLLPSGWVLS) form a helical membrane-spanning segment. Residues 61–69 (HLENYKKRE) are Mitochondrial intermembrane-facing.

It belongs to the cytochrome c oxidase VIII family. In terms of assembly, component of the cytochrome c oxidase (complex IV, CIV), a multisubunit enzyme composed of 14 subunits. The complex is composed of a catalytic core of 3 subunits MT-CO1, MT-CO2 and MT-CO3, encoded in the mitochondrial DNA, and 11 supernumerary subunits COX4I, COX5A, COX5B, COX6A, COX6B, COX6C, COX7A, COX7B, COX7C, COX8 and NDUFA4, which are encoded in the nuclear genome. The complex exists as a monomer or a dimer and forms supercomplexes (SCs) in the inner mitochondrial membrane with NADH-ubiquinone oxidoreductase (complex I, CI) and ubiquinol-cytochrome c oxidoreductase (cytochrome b-c1 complex, complex III, CIII), resulting in different assemblies (supercomplex SCI(1)III(2)IV(1) and megacomplex MCI(2)III(2)IV(2)). In response to mitochondrial stress, the precursor protein is ubiquitinated by the SIFI complex in the cytoplasm before mitochondrial import, leading to its degradation. Within the SIFI complex, UBR4 initiates ubiquitin chain that are further elongated or branched by KCMF1.

The protein localises to the mitochondrion inner membrane. It participates in energy metabolism; oxidative phosphorylation. In terms of biological role, component of the cytochrome c oxidase, the last enzyme in the mitochondrial electron transport chain which drives oxidative phosphorylation. The respiratory chain contains 3 multisubunit complexes succinate dehydrogenase (complex II, CII), ubiquinol-cytochrome c oxidoreductase (cytochrome b-c1 complex, complex III, CIII) and cytochrome c oxidase (complex IV, CIV), that cooperate to transfer electrons derived from NADH and succinate to molecular oxygen, creating an electrochemical gradient over the inner membrane that drives transmembrane transport and the ATP synthase. Cytochrome c oxidase is the component of the respiratory chain that catalyzes the reduction of oxygen to water. Electrons originating from reduced cytochrome c in the intermembrane space (IMS) are transferred via the dinuclear copper A center (CU(A)) of subunit 2 and heme A of subunit 1 to the active site in subunit 1, a binuclear center (BNC) formed by heme A3 and copper B (CU(B)). The BNC reduces molecular oxygen to 2 water molecules using 4 electrons from cytochrome c in the IMS and 4 protons from the mitochondrial matrix. The polypeptide is Cytochrome c oxidase subunit 8A, mitochondrial (COX8A) (Nycticebus coucang (Slow loris)).